Consider the following 248-residue polypeptide: Probable transcriptional regulatory protein ECH_0704 (248 aa).

Positions 1–21 (MAGHSQFANIKHRKGAQDAKR) are disordered.

Belongs to the TACO1 family.

Its subcellular location is the cytoplasm. This Ehrlichia chaffeensis (strain ATCC CRL-10679 / Arkansas) protein is Probable transcriptional regulatory protein ECH_0704.